The chain runs to 503 residues: Probable cytosol aminopeptidase (503 aa).

Residues lysine 274 and aspartate 279 each contribute to the Mn(2+) site. Residue lysine 286 is part of the active site. Residues aspartate 297, aspartate 356, and glutamate 358 each contribute to the Mn(2+) site. Residue arginine 360 is part of the active site.

It belongs to the peptidase M17 family. Mn(2+) serves as cofactor.

It localises to the cytoplasm. The catalysed reaction is Release of an N-terminal amino acid, Xaa-|-Yaa-, in which Xaa is preferably Leu, but may be other amino acids including Pro although not Arg or Lys, and Yaa may be Pro. Amino acid amides and methyl esters are also readily hydrolyzed, but rates on arylamides are exceedingly low.. It carries out the reaction Release of an N-terminal amino acid, preferentially leucine, but not glutamic or aspartic acids.. In terms of biological role, presumably involved in the processing and regular turnover of intracellular proteins. Catalyzes the removal of unsubstituted N-terminal amino acids from various peptides. In Paraburkholderia phymatum (strain DSM 17167 / CIP 108236 / LMG 21445 / STM815) (Burkholderia phymatum), this protein is Probable cytosol aminopeptidase.